Consider the following 742-residue polypeptide: Collectin-12 (742 aa).

The Cytoplasmic portion of the chain corresponds to M1–K37. The chain crosses the membrane as a helical; Signal-anchor for type II membrane protein span at residues F38–G58. The Extracellular portion of the chain corresponds to Y59–L742. N-linked (GlcNAc...) asparagine glycosylation occurs at N67. Residues E73–N142 are a coiled coil. N159 and N168 each carry an N-linked (GlcNAc...) asparagine glycan. Residues N205 to D254 are a coiled coil. N271 carries N-linked (GlcNAc...) asparagine glycosylation. The tract at residues T439 to P608 is disordered. 2 consecutive Collagen-like domains span residues G452 to R511 and G527 to S586. Residues S501–P514 show a composition bias toward low complexity. The segment covering K516–P532 has biased composition (pro residues). The span at K534 to P556 shows a compositional bias: low complexity. Pro residues predominate over residues P571–P585. 3 disulfides stabilise this stretch: C607-C618, C635-C730, and C708-C722. The C-type lectin domain occupies F614–E731. Residues F644, N646, E650, D670, and E674 each contribute to the Ca(2+) site. A carbohydrate contacts are provided by K691, Q694, and D696. Ca(2+)-binding residues include Q694, D696, N697, E706, D707, N718, D719, and E731. E706 contacts a carbohydrate. A carbohydrate is bound by residues N718 and D719.

In terms of assembly, the extracellular domain forms a stable trimer. The extracellular domain interacts with fibrillar amyloid-beta peptide. Expressed in vascular endothelial cells in the heart, in perivascular macrophage and smooth muscle cells. Expressed in plaques-surrounding reactive astrocytes located in cerebral cortex and hippocampus and in leptomeningeal vessels showing characteristics of cerebral amyloid angiopathy (CAA) in a double transgenic mouse model of Alzheimer disease (at protein level). Strongly expressed in lung. Moderately expressed in heart, skeletal muscle, spleen, liver, brain, colon, testis, stomach and kidney. Expressed in neonatal astrocytes. Expressed in reactive astrocytes and vascular/perivascular cells in the brain of a double transgenic mouse model of Alzheimer disease.

The protein resides in the membrane. Functionally, scavenger receptor that displays several functions associated with host defense. Promotes binding and phagocytosis of Gram-positive, Gram-negative bacteria and yeast. Also binds to sialyl Lewis X or a trisaccharide and asialo-orosomucoid (ASOR). Mediates the recognition, internalization and degradation of oxidatively modified low density lipoprotein (oxLDL) by vascular endothelial cells. Binds to several carbohydrates including Gal-type ligands, D-galactose, L- and D-fucose, GalNAc, T and Tn antigens in a calcium-dependent manner and internalizes specifically GalNAc in nurse-like cells. The polypeptide is Collectin-12 (Colec12) (Mus musculus (Mouse)).